Reading from the N-terminus, the 1105-residue chain is AP-3 complex subunit beta-1 (1105 aa).

2 disordered regions span residues 1–26 and 271–292; these read MSSNSFAYNEQSGGGEAAELGQEATS and KNFYESEEEEEEKEKSSRKKSY. Phosphoserine occurs at positions 276 and 610. The segment at 668-824 is disordered; it reads KKEKPMKKFY…KPQQERHPPS (157 aa). Acidic residues predominate over residues 679–704; it reads ESEEEEDEDEDEDEEEEEKEDEDENP. Composition is skewed to low complexity over residues 705–722 and 730–741; these read SDSSSDSESGSGSESGDT and DSSSGQDSETGS. Basic residues predominate over residues 750 to 759; sequence VAKRNSKTKR. Positions 760-774 are enriched in basic and acidic residues; it reads KSDSENREKKNENSK. 2 positions are modified to phosphoserine: serine 761 and serine 763. Residues 775 to 788 show a composition bias toward low complexity; that stretch reads ASESSSEESSSMED. Positions 789 to 799 are enriched in acidic residues; the sequence is SSSESESESGS. Positions 811 to 824 are enriched in basic and acidic residues; the sequence is AKERKPQQERHPPS.

Belongs to the adaptor complexes large subunit family. Adaptor protein complex 3 (AP-3) is a heterotetramer composed of two large adaptins (delta-type subunit AP3D1 and beta-type subunit AP3B1 or AP3B2), a medium adaptin (mu-type subunit AP3M1 or AP3M2) and a small adaptin (sigma-type subunit APS1 or AP3S2). AP-3 associates with the BLOC-1 complex. Interacts with KIF3A; interaction is direct; interaction is impaired by pyrophosphorylation of AP3B1. In terms of processing, phosphorylated on serine residues. Pyrophosphorylated by 5-diphosphoinositol pentakisphosphate (5-IP7). Pyrophosphorylation impairs interaction with KIF3A. Serine pyrophosphorylation is achieved by Mg(2+)-dependent, but enzyme independent transfer of a beta-phosphate from a inositol pyrophosphate to a pre-phosphorylated serine residue. In terms of tissue distribution, ubiquitously expressed.

The protein localises to the cytoplasmic vesicle. It is found in the clathrin-coated vesicle membrane. The protein resides in the golgi apparatus. Its function is as follows. Subunit of non-clathrin- and clathrin-associated adaptor protein complex 3 (AP-3) that plays a role in protein sorting in the late-Golgi/trans-Golgi network (TGN) and/or endosomes. The AP complexes mediate both the recruitment of clathrin to membranes and the recognition of sorting signals within the cytosolic tails of transmembrane cargo molecules. AP-3 appears to be involved in the sorting of a subset of transmembrane proteins targeted to lysosomes and lysosome-related organelles. In concert with the BLOC-1 complex, AP-3 is required to target cargos into vesicles assembled at cell bodies for delivery into neurites and nerve terminals. The protein is AP-3 complex subunit beta-1 (Ap3b1) of Mus musculus (Mouse).